Consider the following 124-residue polypeptide: Large ribosomal subunit protein bL20c (124 aa).

The protein belongs to the bacterial ribosomal protein bL20 family.

Its subcellular location is the plastid. The protein localises to the chloroplast. Binds directly to 23S ribosomal RNA and is necessary for the in vitro assembly process of the 50S ribosomal subunit. It is not involved in the protein synthesizing functions of that subunit. The protein is Large ribosomal subunit protein bL20c of Stigeoclonium helveticum (Green alga).